The chain runs to 88 residues: Small ribosomal subunit protein bS20 (88 aa).

The protein belongs to the bacterial ribosomal protein bS20 family.

In terms of biological role, binds directly to 16S ribosomal RNA. This chain is Small ribosomal subunit protein bS20, found in Clostridium novyi (strain NT).